Reading from the N-terminus, the 497-residue chain is Peptidoglycan endopeptidase RipA (497 aa).

A signal peptide spans 1-39 (MRRTVRALATRVHGRVCAVPLVVGMLLATALYGGGPAAA). Basic and acidic residues predominate over residues 177–192 (ARLAKEKADQAARDAE). Disordered stretches follow at residues 177-198 (ARLA…QDNA) and 253-297 (APAA…GQNW). Positions 255–273 (AAAPAPVPNSAPAPVPGAQ) are enriched in pro residues. Residues 365–497 (REAVEYVIRR…TPYVTRLIEY (133 aa)) form the NlpC/P60 domain. Cys408 functions as the Nucleophile in the catalytic mechanism. His457 acts as the Proton acceptor in catalysis. The active site involves Glu469.

It belongs to the peptidase C40 family. As to quaternary structure, monomer.

It is found in the secreted. Peptidoglycan endopeptidase that cleaves the bond between D-glutamate and meso-diaminopimelate. Binds and degrades high-molecular weight peptidoglycan. Required for normal separation of daughter cells after cell division and for cell wall integrity. The sequence is that of Peptidoglycan endopeptidase RipA (ripA) from Mycolicibacterium smegmatis (strain ATCC 700084 / mc(2)155) (Mycobacterium smegmatis).